Consider the following 732-residue polypeptide: Catalase-peroxidase (732 aa).

Residues 1–11 (MDAKTDDKDGG) are compositionally biased toward basic and acidic residues. Positions 1–24 (MDAKTDDKDGGKCPFPHGGGRGRR) are disordered. A cross-link (tryptophyl-tyrosyl-methioninium (Trp-Tyr) (with M-245)) is located at residues 97-219 (WHSAGTYRTT…LGAVQMGLIY (123 aa)). The active-site Proton acceptor is histidine 98. Residues 219 to 245 (YVNPEGPNGNPDPVAAAKDIRETFARM) constitute a cross-link (tryptophyl-tyrosyl-methioninium (Tyr-Met) (with W-97)). Histidine 260 contacts heme b.

The protein belongs to the peroxidase family. Peroxidase/catalase subfamily. In terms of assembly, homodimer or homotetramer. The cofactor is heme b. In terms of processing, formation of the three residue Trp-Tyr-Met cross-link is important for the catalase, but not the peroxidase activity of the enzyme.

The enzyme catalyses H2O2 + AH2 = A + 2 H2O. It catalyses the reaction 2 H2O2 = O2 + 2 H2O. Its function is as follows. Bifunctional enzyme with both catalase and broad-spectrum peroxidase activity. This is Catalase-peroxidase from Rhodopseudomonas palustris (strain HaA2).